The sequence spans 906 residues: Protein translocase subunit SecA (906 aa).

Residues Gln86, 104-108, and Asp511 contribute to the ATP site; that span reads GEGKT. Composition is skewed to basic and acidic residues over residues 853–865 and 877–888; these read HESV…RHDE and VRREGPKVKRND. The interval 853 to 906 is disordered; it reads HESVIDNNQRHDEDEQEEAPKVQQVRREGPKVKRNDPCPCGSGKKYKQCHGKVE. Positions 890, 892, 901, and 902 each coordinate Zn(2+). The span at 896–906 shows a compositional bias: basic residues; that stretch reads KKYKQCHGKVE.

It belongs to the SecA family. In terms of assembly, monomer and homodimer. Part of the essential Sec protein translocation apparatus which comprises SecA, SecYEG and auxiliary proteins SecDF-YajC and YidC. Zn(2+) is required as a cofactor.

It is found in the cell inner membrane. Its subcellular location is the cytoplasm. The catalysed reaction is ATP + H2O + cellular proteinSide 1 = ADP + phosphate + cellular proteinSide 2.. In terms of biological role, part of the Sec protein translocase complex. Interacts with the SecYEG preprotein conducting channel. Has a central role in coupling the hydrolysis of ATP to the transfer of proteins into and across the cell membrane, serving both as a receptor for the preprotein-SecB complex and as an ATP-driven molecular motor driving the stepwise translocation of polypeptide chains across the membrane. The sequence is that of Protein translocase subunit SecA from Francisella tularensis subsp. holarctica (strain OSU18).